A 92-amino-acid chain; its full sequence is Transcriptional regulator WhiB1 (92 aa).

Residues alanine 12 to alanine 74 form the 4Fe-4S Wbl-type domain. [4Fe-4S] cluster-binding residues include cysteine 13, cysteine 41, cysteine 44, and cysteine 50.

It belongs to the WhiB family. It depends on [4Fe-4S] cluster as a cofactor. Post-translationally, the Fe-S cluster can be nitrosylated by nitric oxide (NO). Upon Fe-S cluster removal intramolecular disulfide bonds are formed.

It localises to the cytoplasm. Functionally, acts as a transcriptional regulator. Probably redox-responsive. The apo- but not holo-form probably binds DNA. The chain is Transcriptional regulator WhiB1 (whiB1) from Bifidobacterium longum (strain NCC 2705).